Reading from the N-terminus, the 526-residue chain is Bifunctional purine biosynthesis protein PurH (526 aa).

In terms of domain architecture, MGS-like spans 1–145 (MSKAPLALLS…KNHAHVGIVT (145 aa)).

Belongs to the PurH family.

It catalyses the reaction (6R)-10-formyltetrahydrofolate + 5-amino-1-(5-phospho-beta-D-ribosyl)imidazole-4-carboxamide = 5-formamido-1-(5-phospho-D-ribosyl)imidazole-4-carboxamide + (6S)-5,6,7,8-tetrahydrofolate. The enzyme catalyses IMP + H2O = 5-formamido-1-(5-phospho-D-ribosyl)imidazole-4-carboxamide. It functions in the pathway purine metabolism; IMP biosynthesis via de novo pathway; 5-formamido-1-(5-phospho-D-ribosyl)imidazole-4-carboxamide from 5-amino-1-(5-phospho-D-ribosyl)imidazole-4-carboxamide (10-formyl THF route): step 1/1. It participates in purine metabolism; IMP biosynthesis via de novo pathway; IMP from 5-formamido-1-(5-phospho-D-ribosyl)imidazole-4-carboxamide: step 1/1. In Psychrobacter cryohalolentis (strain ATCC BAA-1226 / DSM 17306 / VKM B-2378 / K5), this protein is Bifunctional purine biosynthesis protein PurH.